Reading from the N-terminus, the 630-residue chain is Succinate dehydrogenase [ubiquinone] flavoprotein subunit, mitochondrial (630 aa).

The transit peptide at 1-31 (MWRGCVSRGLRSLSKGKGSSSSAPVSAAARL) directs the protein to the mitochondrion. FAD-binding positions include 52–57 (GAGGAG), 75–90 (TKLF…AQGG), and aspartate 260. A Tele-8alpha-FAD histidine modification is found at histidine 83. Substrate is bound by residues histidine 281 and threonine 293. Arginine 325 (proton acceptor) is an active-site residue. Residue histidine 392 coordinates substrate. Glutamate 426 serves as a coordination point for FAD. Position 437 (arginine 437) interacts with substrate. 442-443 (SL) contacts FAD.

The protein belongs to the FAD-dependent oxidoreductase 2 family. FRD/SDH subfamily. Component of complex II composed of eight subunits in plants: four classical SDH subunits SDH1, SDH2, SDH3 and SDH4 (a flavoprotein (FP), an iron-sulfur protein (IP), and a cytochrome b composed of a large and a small subunit.), as well as four subunits unknown in mitochondria from bacteria and heterotrophic eukaryotes. Requires FAD as cofactor.

Its subcellular location is the mitochondrion inner membrane. The catalysed reaction is a quinone + succinate = fumarate + a quinol. Its pathway is carbohydrate metabolism; tricarboxylic acid cycle; fumarate from succinate (eukaryal route): step 1/1. In terms of biological role, flavoprotein (FP) subunit of succinate dehydrogenase (SDH) that is involved in complex II of the mitochondrial electron transport chain and is responsible for transferring electrons from succinate to ubiquinone (coenzyme Q). The sequence is that of Succinate dehydrogenase [ubiquinone] flavoprotein subunit, mitochondrial (SDH1) from Oryza sativa subsp. japonica (Rice).